A 445-amino-acid chain; its full sequence is UPF0210 protein SSA_2018 (445 aa).

It belongs to the UPF0210 family. Homodimer.

This is UPF0210 protein SSA_2018 from Streptococcus sanguinis (strain SK36).